We begin with the raw amino-acid sequence, 492 residues long: Pentatricopeptide repeat-containing protein At4g21705, mitochondrial (492 aa).

The transit peptide at 1–17 directs the protein to the mitochondrion; that stretch reads MNILRRIPANLIASRYY. PPR repeat units follow at residues 125–159, 160–194, 195–225, 231–261, 266–296, 301–335, 336–370, and 371–405; these read NDKT…GFVT, SSLT…NVAP, DNYS…MERR, DWNT…SENR, DGEG…EKDV, INQD…GNCY, DFRV…GKAT, and TPES…EVGS.

It belongs to the PPR family. P subfamily.

It is found in the mitochondrion. This is Pentatricopeptide repeat-containing protein At4g21705, mitochondrial from Arabidopsis thaliana (Mouse-ear cress).